Here is a 346-residue protein sequence, read N- to C-terminus: Quinolinate synthase (346 aa).

The iminosuccinate site is built by His-47 and Ser-68. Cys-113 lines the [4Fe-4S] cluster pocket. Iminosuccinate-binding positions include 139-141 (YAN) and Ser-156. Position 200 (Cys-200) interacts with [4Fe-4S] cluster. Iminosuccinate is bound by residues 226-228 (HPE) and Thr-243. A [4Fe-4S] cluster-binding site is contributed by Cys-297.

The protein belongs to the quinolinate synthase family. Type 1 subfamily. It depends on [4Fe-4S] cluster as a cofactor.

The protein resides in the cytoplasm. The catalysed reaction is iminosuccinate + dihydroxyacetone phosphate = quinolinate + phosphate + 2 H2O + H(+). It participates in cofactor biosynthesis; NAD(+) biosynthesis; quinolinate from iminoaspartate: step 1/1. Functionally, catalyzes the condensation of iminoaspartate with dihydroxyacetone phosphate to form quinolinate. This chain is Quinolinate synthase, found in Photorhabdus laumondii subsp. laumondii (strain DSM 15139 / CIP 105565 / TT01) (Photorhabdus luminescens subsp. laumondii).